The sequence spans 578 residues: Sulfite reductase [NADPH] hemoprotein beta-component (578 aa).

C441, C447, C487, and C491 together coordinate [4Fe-4S] cluster. C491 contacts siroheme.

This sequence belongs to the nitrite and sulfite reductase 4Fe-4S domain family. As to quaternary structure, alpha(8)-beta(8). The alpha component is a flavoprotein, the beta component is a hemoprotein. Requires siroheme as cofactor. [4Fe-4S] cluster serves as cofactor.

The catalysed reaction is hydrogen sulfide + 3 NADP(+) + 3 H2O = sulfite + 3 NADPH + 4 H(+). It participates in sulfur metabolism; hydrogen sulfide biosynthesis; hydrogen sulfide from sulfite (NADPH route): step 1/1. Its function is as follows. Component of the sulfite reductase complex that catalyzes the 6-electron reduction of sulfite to sulfide. This is one of several activities required for the biosynthesis of L-cysteine from sulfate. In Vibrio parahaemolyticus serotype O3:K6 (strain RIMD 2210633), this protein is Sulfite reductase [NADPH] hemoprotein beta-component.